The following is a 259-amino-acid chain: Tryptophan synthase alpha chain (259 aa).

Catalysis depends on proton acceptor residues glutamate 52 and aspartate 63.

It belongs to the TrpA family. As to quaternary structure, tetramer of two alpha and two beta chains.

The catalysed reaction is (1S,2R)-1-C-(indol-3-yl)glycerol 3-phosphate + L-serine = D-glyceraldehyde 3-phosphate + L-tryptophan + H2O. It participates in amino-acid biosynthesis; L-tryptophan biosynthesis; L-tryptophan from chorismate: step 5/5. Functionally, the alpha subunit is responsible for the aldol cleavage of indoleglycerol phosphate to indole and glyceraldehyde 3-phosphate. This Streptococcus sanguinis (strain SK36) protein is Tryptophan synthase alpha chain.